Here is a 279-residue protein sequence, read N- to C-terminus: Shikimate dehydrogenase (NADP(+)) (279 aa).

Shikimate is bound by residues 19-21 and Thr66; that span reads SRS. The Proton acceptor role is filled by Lys70. 2 residues coordinate shikimate: Asn91 and Asp106. Residues 129–133, 152–157, and Ile218 contribute to the NADP(+) site; these read GAGGA and NRTLER. Tyr220 serves as a coordination point for shikimate. Gly241 serves as a coordination point for NADP(+).

The protein belongs to the shikimate dehydrogenase family. As to quaternary structure, homodimer.

The enzyme catalyses shikimate + NADP(+) = 3-dehydroshikimate + NADPH + H(+). It participates in metabolic intermediate biosynthesis; chorismate biosynthesis; chorismate from D-erythrose 4-phosphate and phosphoenolpyruvate: step 4/7. Functionally, involved in the biosynthesis of the chorismate, which leads to the biosynthesis of aromatic amino acids. Catalyzes the reversible NADPH linked reduction of 3-dehydroshikimate (DHSA) to yield shikimate (SA). The polypeptide is Shikimate dehydrogenase (NADP(+)) (Gluconobacter oxydans (strain 621H) (Gluconobacter suboxydans)).